We begin with the raw amino-acid sequence, 88 residues long: Sec-independent protein translocase protein TatA (88 aa).

The chain crosses the membrane as a helical span at residues 1–21 (MGSLSPWHWAILAVVVIVLFG). The span at 43 to 52 (MREMQSETKA) shows a compositional bias: basic and acidic residues. The disordered stretch occupies residues 43-88 (MREMQSETKAEPSAIETNTANPTPVQSQRIDPAAATGQDQTEARPA). The segment covering 57–71 (IETNTANPTPVQSQR) has biased composition (polar residues).

It belongs to the TatA/E family. As to quaternary structure, the Tat system comprises two distinct complexes: a TatABC complex, containing multiple copies of TatA, TatB and TatC subunits, and a separate TatA complex, containing only TatA subunits. Substrates initially bind to the TatABC complex, which probably triggers association of the separate TatA complex to form the active translocon.

Its subcellular location is the cell membrane. In terms of biological role, part of the twin-arginine translocation (Tat) system that transports large folded proteins containing a characteristic twin-arginine motif in their signal peptide across membranes. TatA could form the protein-conducting channel of the Tat system. In Mycobacterium marinum (strain ATCC BAA-535 / M), this protein is Sec-independent protein translocase protein TatA.